Reading from the N-terminus, the 187-residue chain is CASP-like protein 2 (187 aa).

Residues Met-1–Gly-24 lie on the Cytoplasmic side of the membrane. The helical transmembrane segment at Leu-25 to Leu-45 threads the bilayer. Residues Ser-46–Thr-72 are Extracellular-facing. Residues Phe-73–Leu-93 form a helical membrane-spanning segment. The Cytoplasmic portion of the chain corresponds to Ser-94–Arg-108. Residues Ile-109–Ala-129 form a helical membrane-spanning segment. The Extracellular portion of the chain corresponds to Gly-130 to Leu-163. The chain crosses the membrane as a helical span at residues Ile-164–Ile-184. The Cytoplasmic segment spans residues Ser-185–His-187.

It belongs to the Casparian strip membrane proteins (CASP) family. As to quaternary structure, homodimer and heterodimers.

It is found in the cell membrane. This Lotus japonicus (Lotus corniculatus var. japonicus) protein is CASP-like protein 2.